We begin with the raw amino-acid sequence, 256 residues long: 6-carboxyhexanoate--CoA ligase (256 aa).

Belongs to the BioW family. As to quaternary structure, homodimer. The cofactor is Mg(2+).

It catalyses the reaction heptanedioate + ATP + CoA = 6-carboxyhexanoyl-CoA + AMP + diphosphate. The protein operates within metabolic intermediate metabolism; pimeloyl-CoA biosynthesis; pimeloyl-CoA from pimelate: step 1/1. Its function is as follows. Catalyzes the transformation of pimelate into pimeloyl-CoA with concomitant hydrolysis of ATP to AMP. The polypeptide is 6-carboxyhexanoate--CoA ligase (Bacillus velezensis (strain DSM 23117 / BGSC 10A6 / LMG 26770 / FZB42) (Bacillus amyloliquefaciens subsp. plantarum)).